Reading from the N-terminus, the 330-residue chain is Zinc finger protein Gfi-1b (330 aa).

An SNAG domain region spans residues 1 to 20 (MPRSFLVKSKKAHTYHQPRV). The interval 1-42 (MPRSFLVKSKKAHTYHQPRVQEDEPLWPPALTPVPRDQAPSN) is disordered. At K8 the chain carries N6,N6-dimethyllysine. An interaction with ARIH2 region spans residues 91–330 (GDSPLSDSPP…RHRESQHNLK (240 aa)). 6 C2H2-type zinc fingers span residues 163–186 (YHCV…RRSH), 192–214 (FACD…THVH), 220–242 (FECR…LLIH), 248–270 (YPCQ…TYIH), 276–298 (HKCQ…SRKH), and 304–327 (FSCE…ESQH). Positions 164–330 (HCVKCNKVFS…RHRESQHNLK (167 aa)) are mediates interaction with GATA1.

In terms of assembly, component of a RCOR-GFI-KDM1A-HDAC complex. Interacts directly with RCOR1, KDM1A and HDAC2. Forms a complex with GATA1. Interacts with histone methyltransferases EHMT2 and SUV39H1. Interacts with ARIH2 (via RING-type 2). Interacts with RUNX1T1. Post-translationally, methylation at Lys-8 in the SNAG domain seems required for the recruitment of the corepressor complex. As to expression, expressed in bone marrow and fetal liver, but also detectable in fetal spleen, fetal thymus, and testes. Detected in hematopoietic stem cells, erythroblasts, and megakaryocytes. Overexpressed in bone marrow of patients with erythroleukemia and megakaryocytic leukemia as well as in their corresponding leukemic cell lines, and markedly repressed in severe aplastic anemia (SAA).

The protein localises to the nucleus. In terms of biological role, essential proto-oncogenic transcriptional regulator necessary for development and differentiation of erythroid and megakaryocytic lineages. Component of a RCOR-GFI-KDM1A-HDAC complex that suppresses, via histone deacetylase (HDAC) recruitment, a number of genes implicated in multilineage blood cell development and controls hematopoietic differentiation. Transcriptional repressor or activator depending on both promoter and cell type context; represses promoter activity of SOCS1 and SOCS3 and thus, may regulate cytokine signaling pathways. Cooperates with GATA1 to repress target gene transcription, such as the apoptosis regulator BCL2L1; GFI1B silencing in leukemic cell lines markedly increase apoptosis rate. Inhibits down-regulation of MYC and MYB as well as the cyclin-dependent kinase inhibitor CDKN1A/P21WAF1 in IL6-treated myelomonocytic cells. Represses expression of GATA3 in T-cell lymphomas and inhibits GATA1-mediated transcription; as GATA1 also mediates erythroid GFI1B transcription, both GATA1 and GFI1B participate in a feedback regulatory pathway controlling the expression of GFI1B gene in erythroid cells. Suppresses GATA1-mediated stimulation of GFI1B promoter through protein interaction. Binds to gamma-satellite DNA and to its own promoter, auto-repressing its own expression. Alters histone methylation by recruiting histone methyltransferase to target genes promoters. Plays a role in heterochromatin formation. The sequence is that of Zinc finger protein Gfi-1b (GFI1B) from Homo sapiens (Human).